A 338-amino-acid chain; its full sequence is Tetraacyldisaccharide 4'-kinase (338 aa).

Residue 67–74 (IAGGAGKT) participates in ATP binding.

Belongs to the LpxK family.

It carries out the reaction a lipid A disaccharide + ATP = a lipid IVA + ADP + H(+). It functions in the pathway glycolipid biosynthesis; lipid IV(A) biosynthesis; lipid IV(A) from (3R)-3-hydroxytetradecanoyl-[acyl-carrier-protein] and UDP-N-acetyl-alpha-D-glucosamine: step 6/6. Functionally, transfers the gamma-phosphate of ATP to the 4'-position of a tetraacyldisaccharide 1-phosphate intermediate (termed DS-1-P) to form tetraacyldisaccharide 1,4'-bis-phosphate (lipid IVA). The protein is Tetraacyldisaccharide 4'-kinase of Acidovorax ebreus (strain TPSY) (Diaphorobacter sp. (strain TPSY)).